Consider the following 253-residue polypeptide: Phycoerythrobilin:ferredoxin oxidoreductase (253 aa).

Belongs to the HY2 family.

It carries out the reaction (3Z)-phycoerythrobilin + oxidized 2[4Fe-4S]-[ferredoxin] = 15,16-dihydrobiliverdin + reduced 2[4Fe-4S]-[ferredoxin] + 2 H(+). Catalyzes the two-electron reduction of the C2 and C3(1) diene system of 15,16-dihydrobiliverdin. The chain is Phycoerythrobilin:ferredoxin oxidoreductase from Prochlorococcus marinus (strain MIT 9312).